A 359-amino-acid chain; its full sequence is Nicotinate-nucleotide--dimethylbenzimidazole phosphoribosyltransferase (359 aa).

Glu-318 functions as the Proton acceptor in the catalytic mechanism.

Belongs to the CobT family. In terms of assembly, homodimer.

The catalysed reaction is 5,6-dimethylbenzimidazole + nicotinate beta-D-ribonucleotide = alpha-ribazole 5'-phosphate + nicotinate + H(+). It functions in the pathway nucleoside biosynthesis; alpha-ribazole biosynthesis; alpha-ribazole from 5,6-dimethylbenzimidazole: step 1/2. Catalyzes the synthesis of alpha-ribazole-5'-phosphate from nicotinate mononucleotide (NAMN) and 5,6-dimethylbenzimidazole (DMB). The polypeptide is Nicotinate-nucleotide--dimethylbenzimidazole phosphoribosyltransferase (Escherichia coli O9:H4 (strain HS)).